The following is a 225-amino-acid chain: Transcription factor HES-7 (225 aa).

The 58-residue stretch at 12–69 (GPKMLKPLVEKRRRDRINRSLEELRLLLLERTRDQNLRNPKLEKAEILEFAVGYLRER) folds into the bHLH domain. Residues 92-122 (YLSGFRECLLRLAAFAHDASPAARSQLFSAL) enclose the Orange domain. The segment at 124–225 (GYRRPKPPRP…PPPAFWRPWP (102 aa)) is disordered. Pro residues-rich tracts occupy residues 140–149 (LPAPRPPLDP) and 213–225 (PSLPPPAFWRPWP). The WRPW motif motif lies at 221–224 (WRPW).

As to quaternary structure, transcription repression requires formation of a complex with a corepressor protein of the Groucho/TLE family.

It localises to the nucleus. Functionally, transcriptional repressor. Represses transcription from both N box- and E box-containing promoters. May with HES1, cooperatively regulate somite formation in the presomitic mesoderm (PSM). May function as a segmentation clock, which is essential for coordinated somite segmentation. The polypeptide is Transcription factor HES-7 (Hes7) (Mus musculus (Mouse)).